Here is a 276-residue protein sequence, read N- to C-terminus: Large ribosomal subunit protein uL2 (276 aa).

2 disordered regions span residues 35-58 and 218-276; these read RKLSKTGGRNSYGRMTSRHRGGGH and RPIT…KNRK. Over residues 255–276 the composition is skewed to basic residues; sequence RRPKKASNKMIVRRRPNGKNRK.

Belongs to the universal ribosomal protein uL2 family. As to quaternary structure, part of the 50S ribosomal subunit. Forms a bridge to the 30S subunit in the 70S ribosome.

One of the primary rRNA binding proteins. Required for association of the 30S and 50S subunits to form the 70S ribosome, for tRNA binding and peptide bond formation. It has been suggested to have peptidyltransferase activity; this is somewhat controversial. Makes several contacts with the 16S rRNA in the 70S ribosome. The protein is Large ribosomal subunit protein uL2 of Bifidobacterium adolescentis (strain ATCC 15703 / DSM 20083 / NCTC 11814 / E194a).